Consider the following 357-residue polypeptide: Ribosomal RNA large subunit methyltransferase M (357 aa).

S-adenosyl-L-methionine is bound by residues Ser-183, 216 to 219 (APGG), Asp-235, Asp-255, and Asp-271. The active-site Proton acceptor is the Lys-300.

This sequence belongs to the class I-like SAM-binding methyltransferase superfamily. RNA methyltransferase RlmE family. RlmM subfamily. As to quaternary structure, monomer.

It is found in the cytoplasm. It catalyses the reaction cytidine(2498) in 23S rRNA + S-adenosyl-L-methionine = 2'-O-methylcytidine(2498) in 23S rRNA + S-adenosyl-L-homocysteine + H(+). Catalyzes the 2'-O-methylation at nucleotide C2498 in 23S rRNA. The chain is Ribosomal RNA large subunit methyltransferase M from Pseudomonas savastanoi pv. phaseolicola (strain 1448A / Race 6) (Pseudomonas syringae pv. phaseolicola (strain 1448A / Race 6)).